The following is a 626-amino-acid chain: Glutamate--cysteine ligase (626 aa).

This sequence belongs to the glutamate--cysteine ligase type 3 family. In terms of assembly, monomer.

The catalysed reaction is L-cysteine + L-glutamate + ATP = gamma-L-glutamyl-L-cysteine + ADP + phosphate + H(+). The protein operates within sulfur metabolism; glutathione biosynthesis; glutathione from L-cysteine and L-glutamate: step 1/2. Its function is as follows. An essential enzyme in glutathione (L-gamma-glutamyl-L-cysteinylglycine, GSH) biosynthesis, GSH is essential for growth and differentiation to prespore stage. Catalyzes the condensation of glutamate to cysteine. In Dictyostelium discoideum (Social amoeba), this protein is Glutamate--cysteine ligase (gcsA).